The sequence spans 409 residues: POU domain, class 4, transcription factor 2 (409 aa).

The segment at 26–93 (YSALHSTSPG…SEAMRRACLP (68 aa)) is disordered. Residues 31–52 (STSPGSSAPIAPSASSPSSSSN) show a composition bias toward low complexity. Gly residues predominate over residues 53–69 (AGGGGGGGGGGGGGGGR). The segment at 91–237 (CLPTPPSNIF…MHQAALSMAH (147 aa)) is required for transcriptional activation. The POU-IV box signature appears at 110-119 (RAEALAAVDI). Residues 153–166 (AASSSSVPISHPSA) are compositionally biased toward low complexity. Residues 153-188 (AASSSSVPISHPSALAGTHHHHHHHHHHHHQPHQAL) form a disordered region. A compositionally biased stretch (basic residues) spans 170 to 184 (THHHHHHHHHHHHQP). The short motif at 171 to 185 (HHHHHHHHHHHHQPH) is the Nuclear speckle targeting signal element. The segment at 238 to 409 (AHGLPSHMGC…QKRMKYSAGI (172 aa)) is required for DNA-binding and transcriptional repression. The POU-specific domain maps to 250–327 (DVDADPRDLE…ILQAWLEEAE (78 aa)). A DNA-binding region (homeobox) is located at residues 345 to 404 (KKRKRTSIAAPEKRSLEAYFAIQPRPSSEKIAAIAEKLDLKKNVVRVWFCNQRQKQKRMK).

This sequence belongs to the POU transcription factor family. Class-4 subfamily. As to quaternary structure, interacts with POU4F1; this interaction inhibits both POU4F1 DNA-binding and transcriptional activities. Interacts (C-terminus) with ESR1 (via DNA-binding domain); this interaction increases the estrogen receptor ESR1 transcriptional activity in a DNA- and ligand 17-beta-estradiol-independent manner. Interacts (via C-terminus) with TP53 (via N-terminus). Interacts with DLX1 (via homeobox DNA-binding domain); this interaction suppresses DLX1-mediated transcriptional activity in postnatal retina enhancing retinal ganglion cell (RGC) differentiation. Interacts with DLX2 (via homeobox DNA-binding domain); this interaction enhances RGC differentiation. Interacts (via C-terminus) with ISL1 (via C-terminus). Interacts with ISL2. Interacts with LHX2. In terms of tissue distribution, expressed in the brain. Expressed in the ganglion cell layer of the retina.

It is found in the nucleus. Its subcellular location is the nucleus speckle. It localises to the cytoplasm. Tissue-specific DNA-binding transcription factor involved in the development and differentiation of target cells. Functions either as activator or repressor modulating the rate of target gene transcription through RNA polymerase II enzyme in a promoter-dependent manner. Binds to the consensus octamer motif 5'-AT[A/T]A[T/A]T[A/T]A-3' of promoter of target genes. Plays a fundamental role in the gene regulatory network essential for retinal ganglion cell (RGC) differentiation. Binds to an octamer site to form a ternary complex with ISL1; cooperates positively with ISL1 and ISL2 to potentiate transcriptional activation of RGC target genes being involved in RGC fate commitment in the developing retina and RGC axon formation and pathfinding. Inhibits DLX1 and DLX2 transcriptional activities preventing DLX1- and DLX2-mediated ability to promote amacrine cell fate specification. In cooperation with TP53 potentiates transcriptional activation of BAX promoter activity increasing neuronal cell apoptosis. Negatively regulates BAX promoter activity in the absence of TP53. Acts as a transcriptional coactivator via its interaction with the transcription factor ESR1 by enhancing its effect on estrogen response element (ERE)-containing promoter. Antagonizes the transcriptional stimulatory activity of POU4F1 by preventing its binding to an octamer motif. Involved in TNFSF11-mediated terminal osteoclast differentiation. In Homo sapiens (Human), this protein is POU domain, class 4, transcription factor 2.